A 240-amino-acid polypeptide reads, in one-letter code: Pyridoxine 5'-phosphate synthase (240 aa).

A 3-amino-2-oxopropyl phosphate-binding site is contributed by Asn-7. 9–10 contacts 1-deoxy-D-xylulose 5-phosphate; it reads DH. Arg-18 is a 3-amino-2-oxopropyl phosphate binding site. The Proton acceptor role is filled by His-43. 2 residues coordinate 1-deoxy-D-xylulose 5-phosphate: Arg-45 and His-50. Residue Glu-70 is the Proton acceptor of the active site. Position 100 (Thr-100) interacts with 1-deoxy-D-xylulose 5-phosphate. His-191 functions as the Proton donor in the catalytic mechanism. Residues Gly-192 and 213–214 contribute to the 3-amino-2-oxopropyl phosphate site; that span reads GH.

Belongs to the PNP synthase family. In terms of assembly, homooctamer; tetramer of dimers.

The protein resides in the cytoplasm. The catalysed reaction is 3-amino-2-oxopropyl phosphate + 1-deoxy-D-xylulose 5-phosphate = pyridoxine 5'-phosphate + phosphate + 2 H2O + H(+). It participates in cofactor biosynthesis; pyridoxine 5'-phosphate biosynthesis; pyridoxine 5'-phosphate from D-erythrose 4-phosphate: step 5/5. In terms of biological role, catalyzes the complicated ring closure reaction between the two acyclic compounds 1-deoxy-D-xylulose-5-phosphate (DXP) and 3-amino-2-oxopropyl phosphate (1-amino-acetone-3-phosphate or AAP) to form pyridoxine 5'-phosphate (PNP) and inorganic phosphate. This chain is Pyridoxine 5'-phosphate synthase, found in Microcystis aeruginosa (strain NIES-843 / IAM M-2473).